Consider the following 62-residue polypeptide: Translational regulator CsrA (62 aa).

This sequence belongs to the CsrA/RsmA family. In terms of assembly, homodimer; the beta-strands of each monomer intercalate to form a hydrophobic core, while the alpha-helices form wings that extend away from the core.

It localises to the cytoplasm. In terms of biological role, a key translational regulator that binds mRNA to regulate translation initiation and/or mRNA stability. Mediates global changes in gene expression, shifting from rapid growth to stress survival by linking envelope stress, the stringent response and the catabolite repression systems. Usually binds in the 5'-UTR; binding at or near the Shine-Dalgarno sequence prevents ribosome-binding, repressing translation, binding elsewhere in the 5'-UTR can activate translation and/or stabilize the mRNA. Its function is antagonized by small RNA(s). This Idiomarina loihiensis (strain ATCC BAA-735 / DSM 15497 / L2-TR) protein is Translational regulator CsrA.